The chain runs to 157 residues: MGFPKVERLLINYKTLDEFKKFKGCGAQELSMLEELQANIIENDSESPFYGIYYGGSLIARMSLYMKRNGGEPFEITGPYLELYKLEVLPTFQKQGFGQMLVNHAKQMQFPIKTIARIHSSGFWDKLSFNPVSVTDGDFYIWHPETNLNAVTNEESA.

In terms of domain architecture, N-acetyltransferase spans 9–154; it reads LLINYKTLDE…ETNLNAVTNE (146 aa).

This is an uncharacterized protein from Bacillus cereus (strain G9842).